A 909-amino-acid polypeptide reads, in one-letter code: Translation initiation factor IF-2 (909 aa).

The segment at 49 to 314 (LNREQGGSAG…GKQRKTSTLQ (266 aa)) is disordered. Composition is skewed to basic and acidic residues over residues 99-177 (DAVE…EHKQ), 186-236 (IQSE…KWSS), and 255-270 (RAAEDENDAKVEGDRR). The span at 271-285 (ARGRSGKATRQKKNN) shows a compositional bias: basic residues. Residues 286–299 (KHSESKADREEARA) show a composition bias toward basic and acidic residues. In terms of domain architecture, tr-type G spans 408–577 (PRAPVVTIMG…LLQAEVLELK (170 aa)). The segment at 417–424 (GHVDHGKT) is G1. 417-424 (GHVDHGKT) serves as a coordination point for GTP. The G2 stretch occupies residues 442-446 (GITQH). Positions 463–466 (DTPG) are G3. GTP contacts are provided by residues 463–467 (DTPGH) and 517–520 (NKID). The interval 517 to 520 (NKID) is G4. A G5 region spans residues 553–555 (SAK).

The protein belongs to the TRAFAC class translation factor GTPase superfamily. Classic translation factor GTPase family. IF-2 subfamily.

The protein resides in the cytoplasm. In terms of biological role, one of the essential components for the initiation of protein synthesis. Protects formylmethionyl-tRNA from spontaneous hydrolysis and promotes its binding to the 30S ribosomal subunits. Also involved in the hydrolysis of GTP during the formation of the 70S ribosomal complex. The polypeptide is Translation initiation factor IF-2 (Photorhabdus laumondii subsp. laumondii (strain DSM 15139 / CIP 105565 / TT01) (Photorhabdus luminescens subsp. laumondii)).